Here is a 207-residue protein sequence, read N- to C-terminus: Small ribosomal subunit protein uS4 (207 aa).

Positions 31 to 55 are disordered; the sequence is KCKLDSKPGQHGRTSGARTSDYGTQ. Residues 42 to 53 are compositionally biased toward polar residues; that stretch reads GRTSGARTSDYG. The 64-residue stretch at 97 to 160 folds into the S4 RNA-binding domain; that stretch reads SRLDNVVYRM…KKQARIVEAL (64 aa).

It belongs to the universal ribosomal protein uS4 family. As to quaternary structure, part of the 30S ribosomal subunit. Contacts protein S5. The interaction surface between S4 and S5 is involved in control of translational fidelity.

Its function is as follows. One of the primary rRNA binding proteins, it binds directly to 16S rRNA where it nucleates assembly of the body of the 30S subunit. With S5 and S12 plays an important role in translational accuracy. This Burkholderia thailandensis (strain ATCC 700388 / DSM 13276 / CCUG 48851 / CIP 106301 / E264) protein is Small ribosomal subunit protein uS4.